Consider the following 187-residue polypeptide: Cell division protein SepF (187 aa).

The protein belongs to the SepF family. As to quaternary structure, homodimer. Interacts with FtsZ.

Its subcellular location is the cytoplasm. In terms of biological role, cell division protein that is part of the divisome complex and is recruited early to the Z-ring. Probably stimulates Z-ring formation, perhaps through the cross-linking of FtsZ protofilaments. Its function overlaps with FtsA. This Streptococcus suis (strain 98HAH33) protein is Cell division protein SepF.